Consider the following 391-residue polypeptide: Mannose-6-phosphate isomerase (391 aa).

Gln-97, His-99, Glu-134, and His-255 together coordinate Zn(2+). The active site involves Arg-274. N6-acetyllysine is present on Lys-280.

Belongs to the mannose-6-phosphate isomerase type 1 family. It depends on Zn(2+) as a cofactor.

Its subcellular location is the cytoplasm. The enzyme catalyses D-mannose 6-phosphate = D-fructose 6-phosphate. Its function is as follows. Involved in the conversion of glucose to GDP-L-fucose, which can be converted to L-fucose, a capsular polysaccharide. The chain is Mannose-6-phosphate isomerase (manA) from Escherichia coli (strain K12).